Here is a 243-residue protein sequence, read N- to C-terminus: Pyridoxine 5'-phosphate synthase (243 aa).

Asn9 contacts 3-amino-2-oxopropyl phosphate. 11–12 (DH) provides a ligand contact to 1-deoxy-D-xylulose 5-phosphate. 3-amino-2-oxopropyl phosphate is bound at residue Arg20. His45 serves as the catalytic Proton acceptor. The 1-deoxy-D-xylulose 5-phosphate site is built by Arg47 and His52. Residue Glu72 is the Proton acceptor of the active site. Thr102 contacts 1-deoxy-D-xylulose 5-phosphate. Catalysis depends on His193, which acts as the Proton donor. 3-amino-2-oxopropyl phosphate-binding positions include Gly194 and 215 to 216 (GH).

Belongs to the PNP synthase family. In terms of assembly, homooctamer; tetramer of dimers.

Its subcellular location is the cytoplasm. It carries out the reaction 3-amino-2-oxopropyl phosphate + 1-deoxy-D-xylulose 5-phosphate = pyridoxine 5'-phosphate + phosphate + 2 H2O + H(+). It participates in cofactor biosynthesis; pyridoxine 5'-phosphate biosynthesis; pyridoxine 5'-phosphate from D-erythrose 4-phosphate: step 5/5. In terms of biological role, catalyzes the complicated ring closure reaction between the two acyclic compounds 1-deoxy-D-xylulose-5-phosphate (DXP) and 3-amino-2-oxopropyl phosphate (1-amino-acetone-3-phosphate or AAP) to form pyridoxine 5'-phosphate (PNP) and inorganic phosphate. The chain is Pyridoxine 5'-phosphate synthase from Escherichia coli O157:H7.